Consider the following 338-residue polypeptide: Glyceraldehyde-3-phosphate dehydrogenase (338 aa).

NAD(+) is bound by residues 12-13, D34, and R79; that span reads RI. D-glyceraldehyde 3-phosphate contacts are provided by residues 150–152, T181, 210–211, and R233; these read SCT and TG. Residue C151 is the Nucleophile of the active site. N316 lines the NAD(+) pocket.

This sequence belongs to the glyceraldehyde-3-phosphate dehydrogenase family. Homotetramer.

The protein localises to the cytoplasm. The catalysed reaction is D-glyceraldehyde 3-phosphate + phosphate + NAD(+) = (2R)-3-phospho-glyceroyl phosphate + NADH + H(+). The protein operates within carbohydrate degradation; glycolysis; pyruvate from D-glyceraldehyde 3-phosphate: step 1/5. This Phaffia rhodozyma (Yeast) protein is Glyceraldehyde-3-phosphate dehydrogenase (GPD).